Here is a 360-residue protein sequence, read N- to C-terminus: F-box protein SKP2B (360 aa).

Residues 25–76 (ISEWKDIPVELLMKILNLVDDRTVIIASCICSGWRDAVSLGLTRLSLSWCKK) enclose the F-box domain. LRR repeat units follow at residues 77 to 99 (NMNS…VLRQ), 101 to 126 (KPQL…DLSK), 127 to 152 (SSKI…NLSG), 153 to 178 (CTSF…NLCG), 180 to 205 (VEAV…NLGW), 206 to 231 (CENI…DLCS), 232 to 257 (CVLI…GLYY), 258 to 301 (CRNI…NISQ), and 302 to 333 (CTYL…VMSG).

In terms of biological role, component of SCF(SKP2B) E3 ubiquitin ligase complexes, which mediate the ubiquitination and subsequent proteasomal degradation of the cyclin-dependent kinase inhibitor KRP1. Does not interact with auxin. This is F-box protein SKP2B (SKP2B) from Arabidopsis thaliana (Mouse-ear cress).